The following is a 306-amino-acid chain: MVSRRQRPGSGQSEQWVLLAPESLSDDAKNLSDKTIFAKLRAPCTDKGSMFLFIDSGQQICEVKAFHEEYRSWFIGQTVQQDGRLLIATPIDPMFLVLHYLIKADKEQGKFQPVEQIVVDEEFPSCSMLLQCTPVSKSLHHVTEEKEIGSKKFYKYSKEKTLVWLKKKVELTVKVLKSSNICVGGGVQSATFIRNTQGSDVKEEDYTRYAHGLISEYLTEDLREDLSKYLGLPDLSSPTPEPPVKKRKVSEAPVEAEEDYTKFNSDSKNKKSNSKMTAAQKSLAKVDKSGMKNISAFFSPKAKATK.

A disordered region spans residues 232–285 (LPDLSSPTPEPPVKKRKVSEAPVEAEEDYTKFNSDSKNKKSNSKMTAAQKSLAK). The segment covering 259–269 (DYTKFNSDSKN) has biased composition (basic and acidic residues).

Belongs to the RNase H2 subunit B family. The RNase H2 complex is a heterotrimer composed of the catalytic subunit rnaseh2a and the non-catalytic subunits rnaseh2b and rnaseh2c.

It localises to the nucleus. In terms of biological role, non catalytic subunit of RNase H2, an endonuclease that specifically degrades the RNA of RNA:DNA hybrids. Participates in DNA replication, possibly by mediating the removal of lagging-strand Okazaki fragment RNA primers during DNA replication. Mediates the excision of single ribonucleotides from DNA:RNA duplexes. The sequence is that of Ribonuclease H2 subunit B (rnaseh2b) from Xenopus tropicalis (Western clawed frog).